Reading from the N-terminus, the 84-residue chain is Small ribosomal subunit protein bS16 (84 aa).

Belongs to the bacterial ribosomal protein bS16 family.

The sequence is that of Small ribosomal subunit protein bS16 from Deinococcus radiodurans (strain ATCC 13939 / DSM 20539 / JCM 16871 / CCUG 27074 / LMG 4051 / NBRC 15346 / NCIMB 9279 / VKM B-1422 / R1).